A 128-amino-acid polypeptide reads, in one-letter code: Disintegrin ocellatusin (128 aa).

Positions 1–20 (MIPVLLVTICLAVFPFQGSS) are cleaved as a signal peptide. A propeptide spanning residues 21-65 (IILESGNINDYEIVYPKKVAVLPTGAMNSAHPCYDPVTCQPKEKE) is cleaved from the precursor. The region spanning 26-112 (GNINDYEIVY…DCPRNPYKGE (87 aa)) is the Disintegrin domain. 5 disulfides stabilise this stretch: Cys53-Cys59, Cys67-Cys76, Cys72-Cys97, Cys73-Cys102, and Cys85-Cys104. Residues 89–91 (RGD) carry the Cell attachment site motif. A propeptide spanning residues 116 to 128 (MEWPAPAKGSVLM) is cleaved from the precursor.

As to quaternary structure, monomer. In terms of tissue distribution, expressed by the venom gland.

It localises to the secreted. Its function is as follows. The disintegrin ocellatusin-10c1 is a poor inhibitor of platelet aggregation. The disintegrin inhibits the adhesion of cells expressing the RGD-dependent integrin alpha-5/beta-1 (ITGA5/ITGB1) to immobilized fibronectin. Inhibition on alpha-2b/beta-3 (ITGA2B/ITGB3) is low, and there is no inhibition on alpha-1/beta-1 (ITGA1/ITGB1), alpha-2/beta-1 (ITGA2/ITGB1) and alpha-6/beta-1 (ITGA6/ITGB1). The short monomeric disintegrin ocellatusin inhibits ADP-induced platelet aggregation (IC(50)=168 nM). Inhibits alpha-5/beta-1 (ITGA5/ITGB1) integrin and induces the expression of a ligand-induced binding site epitope on beta-1 integrin subunit. Has a direct chemotactic stimulus on human neutrophils in vitro. This is Disintegrin ocellatusin from Echis ocellatus (Ocellated saw-scaled viper).